Consider the following 306-residue polypeptide: MATH domain and coiled-coil domain-containing protein At3g29580 (306 aa).

The MATH domain maps to 6–132 (DNKFTWVIKN…NGEIKIVVEF (127 aa)). A coiled-coil region spans residues 253 to 298 (FKLDWLEKKLNEVLEKKEKEESYETRMREIEEEMKDLKAKALDVGA).

The protein is MATH domain and coiled-coil domain-containing protein At3g29580 of Arabidopsis thaliana (Mouse-ear cress).